Consider the following 160-residue polypeptide: Large ribosomal subunit protein eL21B (160 aa).

The disordered stretch occupies residues 114-140; sequence AKRKEAKAQGKTVQLRRQPAPPATAHF.

It belongs to the eukaryotic ribosomal protein eL21 family. As to quaternary structure, component of the large ribosomal subunit (LSU). Mature yeast ribosomes consist of a small (40S) and a large (60S) subunit. The 40S small subunit contains 1 molecule of ribosomal RNA (18S rRNA) and at least 33 different proteins. The large 60S subunit contains 3 rRNA molecules (25S, 5.8S and 5S rRNA) and at least 46 different proteins.

It localises to the cytoplasm. Its function is as follows. Component of the ribosome, a large ribonucleoprotein complex responsible for the synthesis of proteins in the cell. The small ribosomal subunit (SSU) binds messenger RNAs (mRNAs) and translates the encoded message by selecting cognate aminoacyl-transfer RNA (tRNA) molecules. The large subunit (LSU) contains the ribosomal catalytic site termed the peptidyl transferase center (PTC), which catalyzes the formation of peptide bonds, thereby polymerizing the amino acids delivered by tRNAs into a polypeptide chain. The nascent polypeptides leave the ribosome through a tunnel in the LSU and interact with protein factors that function in enzymatic processing, targeting, and the membrane insertion of nascent chains at the exit of the ribosomal tunnel. This Schizosaccharomyces pombe (strain 972 / ATCC 24843) (Fission yeast) protein is Large ribosomal subunit protein eL21B (rpl2102).